The sequence spans 345 residues: Phosphate acyltransferase (345 aa).

It belongs to the PlsX family. As to quaternary structure, homodimer. Probably interacts with PlsY.

The protein localises to the cytoplasm. It catalyses the reaction a fatty acyl-[ACP] + phosphate = an acyl phosphate + holo-[ACP]. It participates in lipid metabolism; phospholipid metabolism. Catalyzes the reversible formation of acyl-phosphate (acyl-PO(4)) from acyl-[acyl-carrier-protein] (acyl-ACP). This enzyme utilizes acyl-ACP as fatty acyl donor, but not acyl-CoA. This chain is Phosphate acyltransferase, found in Proteus mirabilis (strain HI4320).